Reading from the N-terminus, the 178-residue chain is Outer envelope pore protein 16-2, chloroplastic (178 aa).

The segment at 1–102 is contains beta strands; the sequence is MEKSGGRIVM…DALVKNTGKE (102 aa). Residues 103-119 form a helical membrane-spanning segment; sequence SLQWGLAAGLYSGITYG.

The protein belongs to the Tim17/Tim22/Tim23 family. Plastid outer envelope porin OEP16 (TC 1.B.30) subfamily. Homodimer and oligomers in membrane. In terms of tissue distribution, detected in pollen and seeds. Present in leaves and cotyledons.

It is found in the plastid. The protein resides in the chloroplast outer membrane. Voltage-dependent high-conductance channel with a slight cation-selectivity; selective for amino acids but excludes triosephosphates or uncharged sugars. Non-essential amino acid-selective channel protein and translocation pore for NADPH:protochlorophyllide oxidoreductase A (PORA) and possibly PORB. In Arabidopsis thaliana (Mouse-ear cress), this protein is Outer envelope pore protein 16-2, chloroplastic (OEP162).